We begin with the raw amino-acid sequence, 514 residues long: Sugar transport protein 3 (514 aa).

At 1–19 (MVAEEARKEAMAKSVSGGK) the chain is on the cytoplasmic side. Helical transmembrane passes span 20 to 40 (ITYF…IFGY), 87 to 107 (LLTS…LLAS), 124 to 144 (VSFL…MLII), 147 to 167 (LLLG…LSEM), 174 to 194 (GAIS…ANVI), 207 to 227 (ISLA…LFLP), 289 to 309 (LVMA…VVAF), 327 to 347 (MSTL…MLVV), 356 to 376 (FLIG…IVMV), 392 to 412 (VVVL…PLGW), 430 to 450 (VTVA…PPML), and 456 to 476 (GIFF…QLFL). At 477 to 514 (PETKNVPIEKVVGLWEKHWFWRRMTSKRDIQETTILSH) the chain is on the cytoplasmic side.

It belongs to the major facilitator superfamily. Sugar transporter (TC 2.A.1.1) family.

The protein localises to the membrane. Functionally, mediates an active uptake of hexoses, probably by sugar/hydrogen symport. The chain is Sugar transport protein 3 (STP3) from Arabidopsis thaliana (Mouse-ear cress).